The following is a 278-amino-acid chain: Probable endonuclease 4 (278 aa).

Zn(2+) is bound by residues His70, His108, Glu143, Asp176, His179, His210, Asp223, His225, and Glu255.

It belongs to the AP endonuclease 2 family. Requires Zn(2+) as cofactor.

It catalyses the reaction Endonucleolytic cleavage to 5'-phosphooligonucleotide end-products.. Endonuclease IV plays a role in DNA repair. It cleaves phosphodiester bonds at apurinic or apyrimidinic (AP) sites, generating a 3'-hydroxyl group and a 5'-terminal sugar phosphate. This chain is Probable endonuclease 4, found in Mycoplasmopsis agalactiae (strain NCTC 10123 / CIP 59.7 / PG2) (Mycoplasma agalactiae).